A 455-amino-acid chain; its full sequence is MEVVILAAGQGKRMRSALPKVLQPIAGRPMLEHVIAAAQALEARRICVVHGHGGEAVRARLQHAAVQWALQQPQLGTGHAVLQALPHLTDGDMALVLYGDVPLIGVPTLRRLEAAAGGERLALLTVELADPSGYGRILRDGAGRVVRIVEEKDASADERRVREVNTGILVAPVARLRDWLARLGNDNAQREYYLTDIIGMAVAEGVEVTTVQPDAIWETLGVNSKAQLAELERLHQRNIATRLMEDGVTLFDPSRIDVRGELLCGRDVEIDVNCVFEGRVEIADDVRIGANCVIRNARIGAGTRLAPFSHVEDTTTGRDCVIGPYARTRPGTTLGDGVHLGNFVEVKNSAIADDSKANHLAYIGDADIGRRVNVGAGTITCNYDGANKYRTTIGDDVFIGSDTQLVAPVRVGRGATLGAGTTLTKDAPEDQLTVSRARQISIPGWKRPVKKKAGE.

The pyrophosphorylase stretch occupies residues 1-225 (MEVVILAAGQ…IWETLGVNSK (225 aa)). UDP-N-acetyl-alpha-D-glucosamine-binding positions include 6 to 9 (LAAG), lysine 20, glutamine 71, 76 to 77 (GT), 98 to 100 (YGD), glycine 135, glutamate 150, asparagine 165, and asparagine 223. Aspartate 100 lines the Mg(2+) pocket. Position 223 (asparagine 223) interacts with Mg(2+). The interval 226–246 (AQLAELERLHQRNIATRLMED) is linker. Residues 247–455 (GVTLFDPSRI…KRPVKKKAGE (209 aa)) form an N-acetyltransferase region. The UDP-N-acetyl-alpha-D-glucosamine site is built by arginine 329 and lysine 347. The active-site Proton acceptor is the histidine 359. Residues tyrosine 362 and asparagine 373 each coordinate UDP-N-acetyl-alpha-D-glucosamine. Acetyl-CoA is bound by residues alanine 376, 382-383 (NY), serine 401, alanine 419, and arginine 436.

In the N-terminal section; belongs to the N-acetylglucosamine-1-phosphate uridyltransferase family. This sequence in the C-terminal section; belongs to the transferase hexapeptide repeat family. As to quaternary structure, homotrimer. Mg(2+) is required as a cofactor.

Its subcellular location is the cytoplasm. It catalyses the reaction alpha-D-glucosamine 1-phosphate + acetyl-CoA = N-acetyl-alpha-D-glucosamine 1-phosphate + CoA + H(+). The enzyme catalyses N-acetyl-alpha-D-glucosamine 1-phosphate + UTP + H(+) = UDP-N-acetyl-alpha-D-glucosamine + diphosphate. It participates in nucleotide-sugar biosynthesis; UDP-N-acetyl-alpha-D-glucosamine biosynthesis; N-acetyl-alpha-D-glucosamine 1-phosphate from alpha-D-glucosamine 6-phosphate (route II): step 2/2. Its pathway is nucleotide-sugar biosynthesis; UDP-N-acetyl-alpha-D-glucosamine biosynthesis; UDP-N-acetyl-alpha-D-glucosamine from N-acetyl-alpha-D-glucosamine 1-phosphate: step 1/1. It functions in the pathway bacterial outer membrane biogenesis; LPS lipid A biosynthesis. Catalyzes the last two sequential reactions in the de novo biosynthetic pathway for UDP-N-acetylglucosamine (UDP-GlcNAc). The C-terminal domain catalyzes the transfer of acetyl group from acetyl coenzyme A to glucosamine-1-phosphate (GlcN-1-P) to produce N-acetylglucosamine-1-phosphate (GlcNAc-1-P), which is converted into UDP-GlcNAc by the transfer of uridine 5-monophosphate (from uridine 5-triphosphate), a reaction catalyzed by the N-terminal domain. The polypeptide is Bifunctional protein GlmU (Aromatoleum aromaticum (strain DSM 19018 / LMG 30748 / EbN1) (Azoarcus sp. (strain EbN1))).